An 895-amino-acid chain; its full sequence is Protein translocase subunit SecA (895 aa).

ATP-binding positions include glutamine 86, 104–108 (GEGKT), and aspartate 494. Composition is skewed to low complexity over residues 838–849 (AAATPPGFGAPP) and 870–882 (GDAA…TGNR). A disordered region spans residues 838–895 (AAATPPGFGAPPVRQQLQYSAPTAEGDVEVHAGDAAATDADTGNRAQRRANQRQQREV).

This sequence belongs to the SecA family. In terms of assembly, monomer and homodimer. Part of the essential Sec protein translocation apparatus which comprises SecA, SecYEG and auxiliary proteins SecDF. Other proteins may also be involved.

It localises to the cell membrane. The protein localises to the cytoplasm. It catalyses the reaction ATP + H2O + cellular proteinSide 1 = ADP + phosphate + cellular proteinSide 2.. Part of the Sec protein translocase complex. Interacts with the SecYEG preprotein conducting channel. Has a central role in coupling the hydrolysis of ATP to the transfer of proteins into and across the cell membrane, serving as an ATP-driven molecular motor driving the stepwise translocation of polypeptide chains across the membrane. This Kineococcus radiotolerans (strain ATCC BAA-149 / DSM 14245 / SRS30216) protein is Protein translocase subunit SecA.